The sequence spans 352 residues: Probable protein phosphatase 2C 42 (352 aa).

A PPM-type phosphatase domain is found at 26-321 (AYASSAMQGY…DNMSVILVRF (296 aa)). Mn(2+)-binding residues include Asp-62, Gly-63, Asp-267, and Asp-312. Residues 328-352 (RGARAATSSTSTGTVPSRHSKSISL) form a disordered region. A compositionally biased stretch (low complexity) spans 329–341 (GARAATSSTSTGT).

Belongs to the PP2C family. It depends on Mg(2+) as a cofactor. The cofactor is Mn(2+).

It carries out the reaction O-phospho-L-seryl-[protein] + H2O = L-seryl-[protein] + phosphate. The enzyme catalyses O-phospho-L-threonyl-[protein] + H2O = L-threonyl-[protein] + phosphate. The protein is Probable protein phosphatase 2C 42 of Oryza sativa subsp. japonica (Rice).